The primary structure comprises 64 residues: Large ribosomal subunit protein bL35 (64 aa).

The tract at residues 1–29 (MPKMKTHSGAKKRFKLTGSGKLRRQQANR) is disordered.

Belongs to the bacterial ribosomal protein bL35 family.

In Pseudarthrobacter chlorophenolicus (strain ATCC 700700 / DSM 12829 / CIP 107037 / JCM 12360 / KCTC 9906 / NCIMB 13794 / A6) (Arthrobacter chlorophenolicus), this protein is Large ribosomal subunit protein bL35.